We begin with the raw amino-acid sequence, 606 residues long: Chaperone protein DnaK (606 aa).

Phosphothreonine; by autocatalysis is present on Thr174. Over residues 579-593 the composition is skewed to polar residues; that stretch reads ASAAGNPGQGQTNEN. Residues 579 to 606 are disordered; that stretch reads ASAAGNPGQGQTNENPGGKTIDGDYKVN.

Belongs to the heat shock protein 70 family.

Its function is as follows. Acts as a chaperone. This is Chaperone protein DnaK from Dictyoglomus thermophilum (strain ATCC 35947 / DSM 3960 / H-6-12).